The primary structure comprises 629 residues: DNA-directed RNA polymerase III subunit rpc3 (629 aa).

3 disordered regions span residues 136–164, 247–294, and 373–420; these read ANGVPEEHGEHEEDEEQSNGLNGEHSNEQ, PRGA…EMGY, and QLDL…SGGN. The span at 257–268 shows a compositional bias: basic and acidic residues; that stretch reads RRADEPNKKCRT. Residues 272–293 show a composition bias toward acidic residues; it reads SVDENDEHDEEEENEWSDDEMG. The span at 374-388 shows a compositional bias: polar residues; that stretch reads LDLSSSTGPMDSSQP. Residues 389 to 409 show a composition bias toward basic and acidic residues; it reads DGRRGKRPWDGDVEGTNHEEA. Residues 556–577 form a leucine-zipper region; sequence TYKAMSRCLQRLRFERSRIKDF.

It belongs to the RNA polymerase beta chain family. In terms of assembly, component of the RNA polymerase III (Pol III) complex consisting of 17 subunits.

Its subcellular location is the nucleus. In terms of biological role, DNA-dependent RNA polymerase catalyzes the transcription of DNA into RNA using the four ribonucleoside triphosphates as substrates. Specific core component of RNA polymerase III which synthesizes small RNAs, such as 5S rRNA and tRNAs. In Aspergillus fumigatus (strain ATCC MYA-4609 / CBS 101355 / FGSC A1100 / Af293) (Neosartorya fumigata), this protein is DNA-directed RNA polymerase III subunit rpc3 (rpc82).